We begin with the raw amino-acid sequence, 218 residues long: Peroxynitrite isomerase 2 (218 aa).

The segment at 1 to 24 is disordered; sequence MTPAGDTPERGSGDRAVAEAAERA. Over residues 7-24 the composition is skewed to basic and acidic residues; the sequence is TPERGSGDRAVAEAAERA. Residues 65-71 carry the GXWXGXG motif; that stretch reads GVWRGEG. Positions 181 and 208 each coordinate heme b.

Belongs to the nitrobindin family. In terms of assembly, homodimer. The cofactor is heme b.

The enzyme catalyses peroxynitrite = nitrate. Its pathway is nitrogen metabolism. Its function is as follows. Heme-binding protein able to scavenge peroxynitrite and to protect free L-tyrosine against peroxynitrite-mediated nitration, by acting as a peroxynitrite isomerase that converts peroxynitrite to nitrate. Therefore, this protein likely plays a role in peroxynitrite sensing and in the detoxification of reactive nitrogen and oxygen species (RNS and ROS, respectively). Is able to bind nitric oxide (NO) in vitro, but may act as a sensor of peroxynitrite levels in vivo. The protein is Peroxynitrite isomerase 2 of Mycolicibacterium smegmatis (strain ATCC 700084 / mc(2)155) (Mycobacterium smegmatis).